We begin with the raw amino-acid sequence, 348 residues long: Protein RecA (348 aa).

Position 64 to 71 (64 to 71 (GPESSGKT)) interacts with ATP. The span at 325-335 (YEIDGSSKEPL) shows a compositional bias: basic and acidic residues. Residues 325-348 (YEIDGSSKEPLDEKEETLSLLDDE) form a disordered region.

It belongs to the RecA family.

The protein resides in the cytoplasm. In terms of biological role, can catalyze the hydrolysis of ATP in the presence of single-stranded DNA, the ATP-dependent uptake of single-stranded DNA by duplex DNA, and the ATP-dependent hybridization of homologous single-stranded DNAs. It interacts with LexA causing its activation and leading to its autocatalytic cleavage. This is Protein RecA from Listeria monocytogenes serotype 1/2a (strain 10403S).